Here is a 123-residue protein sequence, read N- to C-terminus: UPF0102 protein PSHAa2523 (123 aa).

This sequence belongs to the UPF0102 family.

This Pseudoalteromonas translucida (strain TAC 125) protein is UPF0102 protein PSHAa2523.